We begin with the raw amino-acid sequence, 660 residues long: Acetyl-coenzyme A synthetase (660 aa).

CoA is bound by residues 197–200 and threonine 317; that span reads RGGK. ATP-binding positions include 397–399, 421–426, aspartate 512, and arginine 528; these read GEP and DTWWQT. Serine 536 lines the CoA pocket. Arginine 539 contacts ATP. 3 residues coordinate Mg(2+): valine 550, histidine 552, and valine 555. An N6-acetyllysine modification is found at lysine 625.

This sequence belongs to the ATP-dependent AMP-binding enzyme family. Mg(2+) is required as a cofactor. Acetylated. Deacetylation by the SIR2-homolog deacetylase activates the enzyme.

It carries out the reaction acetate + ATP + CoA = acetyl-CoA + AMP + diphosphate. Functionally, catalyzes the conversion of acetate into acetyl-CoA (AcCoA), an essential intermediate at the junction of anabolic and catabolic pathways. AcsA undergoes a two-step reaction. In the first half reaction, AcsA combines acetate with ATP to form acetyl-adenylate (AcAMP) intermediate. In the second half reaction, it can then transfer the acetyl group from AcAMP to the sulfhydryl group of CoA, forming the product AcCoA. The chain is Acetyl-coenzyme A synthetase from Burkholderia mallei (strain NCTC 10247).